The following is a 276-amino-acid chain: NADPH-dependent 7-cyano-7-deazaguanine reductase (276 aa).

Residue 83–85 participates in substrate binding; it reads IES. 85 to 86 contacts NADPH; the sequence is SK. Cys-184 functions as the Thioimide intermediate in the catalytic mechanism. Asp-191 acts as the Proton donor in catalysis. 223–224 contributes to the substrate binding site; it reads HE. 252–253 lines the NADPH pocket; sequence RG.

It belongs to the GTP cyclohydrolase I family. QueF type 2 subfamily. In terms of assembly, homodimer.

Its subcellular location is the cytoplasm. It catalyses the reaction 7-aminomethyl-7-carbaguanine + 2 NADP(+) = 7-cyano-7-deazaguanine + 2 NADPH + 3 H(+). The protein operates within tRNA modification; tRNA-queuosine biosynthesis. Catalyzes the NADPH-dependent reduction of 7-cyano-7-deazaguanine (preQ0) to 7-aminomethyl-7-deazaguanine (preQ1). In Desulfotalea psychrophila (strain LSv54 / DSM 12343), this protein is NADPH-dependent 7-cyano-7-deazaguanine reductase.